The chain runs to 255 residues: Imidazole glycerol phosphate synthase subunit HisF (255 aa).

Residues Asp11 and Asp130 contribute to the active site.

It belongs to the HisA/HisF family. As to quaternary structure, heterodimer of HisH and HisF.

The protein resides in the cytoplasm. The enzyme catalyses 5-[(5-phospho-1-deoxy-D-ribulos-1-ylimino)methylamino]-1-(5-phospho-beta-D-ribosyl)imidazole-4-carboxamide + L-glutamine = D-erythro-1-(imidazol-4-yl)glycerol 3-phosphate + 5-amino-1-(5-phospho-beta-D-ribosyl)imidazole-4-carboxamide + L-glutamate + H(+). The protein operates within amino-acid biosynthesis; L-histidine biosynthesis; L-histidine from 5-phospho-alpha-D-ribose 1-diphosphate: step 5/9. In terms of biological role, IGPS catalyzes the conversion of PRFAR and glutamine to IGP, AICAR and glutamate. The HisF subunit catalyzes the cyclization activity that produces IGP and AICAR from PRFAR using the ammonia provided by the HisH subunit. In Rhodopseudomonas palustris (strain HaA2), this protein is Imidazole glycerol phosphate synthase subunit HisF.